The following is a 240-amino-acid chain: Uridylate kinase (240 aa).

13-16 (KFSG) serves as a coordination point for ATP. Gly55 is a UMP binding site. Positions 56 and 60 each coordinate ATP. UMP contacts are provided by residues Asp76 and 137–144 (TGNPFFTT). Residues Thr164, Tyr170, and Asp173 each coordinate ATP.

This sequence belongs to the UMP kinase family. Homohexamer.

Its subcellular location is the cytoplasm. It catalyses the reaction UMP + ATP = UDP + ADP. Its pathway is pyrimidine metabolism; CTP biosynthesis via de novo pathway; UDP from UMP (UMPK route): step 1/1. Inhibited by UTP. Its function is as follows. Catalyzes the reversible phosphorylation of UMP to UDP. This chain is Uridylate kinase, found in Helicobacter pylori (strain ATCC 700392 / 26695) (Campylobacter pylori).